A 2270-amino-acid polypeptide reads, in one-letter code: Protein DOP1B (2270 aa).

Disordered stretches follow at residues 548–572, 697–716, and 1084–1145; these read METP…VEGE, LKQR…TEEE, and QEQD…DMPR. Over residues 1095–1145 the composition is skewed to polar residues; it reads ADTSTGHNDSDNTSSFTPSSVDLSSDQNYRDNTAGQVTHKNTGQQNMDMPR.

It belongs to the DOP1 family.

Its subcellular location is the golgi apparatus membrane. Functionally, may be involved in protein traffic between late Golgi and early endosomes. This Xenopus laevis (African clawed frog) protein is Protein DOP1B (dop1b).